A 142-amino-acid polypeptide reads, in one-letter code: HTH-type transcriptional regulator MntR (142 aa).

In terms of domain architecture, HTH dtxR-type spans 1–63; that stretch reads MPTPSMEDYI…YEKYRGLVLT (63 aa). Positions 8, 11, 77, 99, 102, and 103 each coordinate Mn(2+).

Belongs to the DtxR/MntR family. As to quaternary structure, homodimer.

The protein localises to the cytoplasm. Its activity is regulated as follows. DNA binding is strongly activated by Mn(2+). Central regulator of manganese homeostasis. The chain is HTH-type transcriptional regulator MntR from Bacillus cytotoxicus (strain DSM 22905 / CIP 110041 / 391-98 / NVH 391-98).